Here is a 1129-residue protein sequence, read N- to C-terminus: MEVTVKTLDSQTRTFTVDAEITVKEFKTHISSDVGISPEKQRLIYQGRVLQEDKKLKEYNVDGKVIHLVERAPPQTQPSTGGPSTSSSTSPSSSNAANVPGAGAPERNGNSYVMVGTFNLPHVMSGLGEASRGPRVSTVSGNDGSTLDVHINLDQQLPVQSEPRVRLVLAQQILQDIQRILDRLEGQPVNEQTAEPMDTAVSEGEASSRETLPQTTQNTDGQSNTAPTSHPSPSEYVEVLQSLSRVEERLAPFMQRYREILSSATSDAYENQEEREQSQRIINLVGESLRLLGNALVAVSDLRCNLSSASPRHLHVVRPMSHYTGPMLLQQAAIPIQINVGTTVTMTGNGTHAGQMPSDGNAAHTPTNTSEPQRSNSDNQPPSSGERPASEIPPTSVPHPHPRVVRITHQTVEPVMMMHMNIQDSGPGGPTNIPPPTAGHGGSAHIHMPGLPPEFMQAISHQITQQAVAAASGQQIPGFQAPPRFVFTRPAAPSFPPQPGVATTPPGPGGATTAVPGATVGPAGNASLAQMISGLVGQLLMHPVIVAQGGSNTPSSTSTPTSTSSSSSSSSSTVTTSTTTTSSTSFPTVSSGPSPQPPPGTDQHLSQLLGSLLGTAGSGMSNFAMGSPSITVTVPGMPAFLQGVTDILQATQTVPVSTSPPQSASQAPPPSSPSPPPAHSSPPPAAAPESLPPEFFTSVVQGVLSSMLGSLSAADQSGTESIAAFIQRLSGSHNIFQPDAEGPGGFFGDLLTLICHNFSLVDMVMLLHGHSQPLQNLQPQLRSFFLQEYLHQADPTPNNIQMASRNLTNGLEEYIRESFASVTVRDDVDITRTNLEFLQDQFNRITTHILHCADSTFGQRLLEMCNQSLFEWLALNLYCLRGDQSALTSVINERIRRLSLDVSPVLVSWVTSVLSLRLQVLLGQMPVTEGEIQRHIRRVGDVPQAPEASSQDQPMETTPVDCQNGAASPVPATTVEEVLFLPPQSSVPTICTDSEHPTQEDTGSEQWAASVPPEWVPVIRQDMQNQRKMKQQPPLSDAYLSGMPAKRRKTMQGEGPHLSLSEAVSRAMKATGAKPESSTDCVRRELDNSEAQGRYREQLCQDIQNILQDNESYSAQRFPNTQRAFRGDP.

A Ubiquitin-like domain is found at 1 to 76; the sequence is MEVTVKTLDS…HLVERAPPQT (76 aa). Disordered stretches follow at residues 69–108, 187–235, 347–402, 490–518, 550–606, 654–692, 942–967, and 987–1009; these read VERA…PERN, QPVN…SPSE, TGNG…HPHP, PAAP…VPGA, GSNT…QHLS, VPVS…ESLP, VPQA…NGAA, and VPTI…QWAA. Over residues 73–105 the composition is skewed to low complexity; it reads PPQTQPSTGGPSTSSSTSPSSSNAANVPGAGAP. Composition is skewed to polar residues over residues 209–232 and 364–383; these read RETL…SHPS and HTPT…QPPS. 2 stretches are compositionally biased toward low complexity: residues 553–593 and 655–666; these read TPSS…SSGP and PVSTSPPQSASQ. Positions 667 to 686 are enriched in pro residues; it reads APPPSSPSPPPAHSSPPPAA. Residues 947-956 are compositionally biased toward polar residues; it reads EASSQDQPME.

In terms of assembly, component of the bag6/bat3 complex.

It localises to the cytoplasm. It is found in the cytosol. Its subcellular location is the nucleus. The protein resides in the secreted. The protein localises to the extracellular exosome. In terms of biological role, ATP-independent molecular chaperone preventing the aggregation of misfolded and hydrophobic patches-containing proteins. Functions as part of a cytosolic protein quality control complex, the bag6/bat3 complex, which maintains these client proteins in a soluble state and participates in their proper delivery to the endoplasmic reticulum or alternatively can promote their sorting to the proteasome where they undergo degradation. The bag6/bat3 complex is involved in the post-translational delivery of tail-anchored/type II transmembrane proteins to the endoplasmic reticulum membrane. Similarly, the bag6/bat3 complex also functions as a sorting platform for proteins of the secretory pathway that are mislocalized to the cytosol either delivering them to the proteasome for degradation or to the endoplasmic reticulum. The bag6/bat3 complex also plays a role in the endoplasmic reticulum-associated degradation (ERAD), a quality control mechanism that eliminates unwanted proteins of the endoplasmic reticulum through their retrotranslocation to the cytosol and their targeting to the proteasome. It maintains these retrotranslocated proteins in an unfolded yet soluble state condition in the cytosol to ensure their proper delivery to the proteasome. Also required for selective ubiquitin-mediated degradation of defective nascent chain polypeptides by the proteasome. Also involved in endoplasmic reticulum stress-induced pre-emptive quality control, a mechanism that selectively attenuates the translocation of newly synthesized proteins into the endoplasmic reticulum and reroutes them to the cytosol for proteasomal degradation. May ensure the proper degradation of these proteins and thereby protects the endoplasmic reticulum from protein overload upon stress. By stabilizing a large spectrum of proteins, may indirectly affect different biological processes including apoptosis. By controlling the steady-state expression of the IGF1R receptor, indirectly regulates the insulin-like growth factor receptor signaling pathway. Its function is as follows. When nuclear, may also act as a component of some chromatin regulator complex. This is Large proline-rich protein bag6 from Xenopus tropicalis (Western clawed frog).